The chain runs to 298 residues: Tyrosine recombinase XerC (298 aa).

The Core-binding (CB) domain occupies 1–84 (MNHIQEAFLN…TLRTFYEYWM (84 aa)). The region spanning 105 to 286 (YLPQFFYEEE…SNQQLRKVYL (182 aa)) is the Tyr recombinase domain. Catalysis depends on residues arginine 145, lysine 169, histidine 238, arginine 241, and histidine 264. Catalysis depends on tyrosine 273, which acts as the O-(3'-phospho-DNA)-tyrosine intermediate.

The protein belongs to the 'phage' integrase family. XerC subfamily. In terms of assembly, forms a cyclic heterotetrameric complex composed of two molecules of XerC and two molecules of XerD.

Its subcellular location is the cytoplasm. Functionally, site-specific tyrosine recombinase, which acts by catalyzing the cutting and rejoining of the recombining DNA molecules. The XerC-XerD complex is essential to convert dimers of the bacterial chromosome into monomers to permit their segregation at cell division. It also contributes to the segregational stability of plasmids. The sequence is that of Tyrosine recombinase XerC from Staphylococcus aureus (strain bovine RF122 / ET3-1).